A 187-amino-acid chain; its full sequence is Protein GrpE (187 aa).

Residues 1–11 (MTDSSNEHETE) are compositionally biased toward basic and acidic residues. Residues 1-21 (MTDSSNEHETENPSLPIPDNE) form a disordered region.

The protein belongs to the GrpE family. Homodimer.

The protein localises to the cytoplasm. Functionally, participates actively in the response to hyperosmotic and heat shock by preventing the aggregation of stress-denatured proteins, in association with DnaK and GrpE. It is the nucleotide exchange factor for DnaK and may function as a thermosensor. Unfolded proteins bind initially to DnaJ; upon interaction with the DnaJ-bound protein, DnaK hydrolyzes its bound ATP, resulting in the formation of a stable complex. GrpE releases ADP from DnaK; ATP binding to DnaK triggers the release of the substrate protein, thus completing the reaction cycle. Several rounds of ATP-dependent interactions between DnaJ, DnaK and GrpE are required for fully efficient folding. This chain is Protein GrpE, found in Chlamydia caviae (strain ATCC VR-813 / DSM 19441 / 03DC25 / GPIC) (Chlamydophila caviae).